The chain runs to 89 residues: Large ribosomal subunit protein bL27 (89 aa).

The disordered stretch occupies residues Met-1 to Arg-20.

This sequence belongs to the bacterial ribosomal protein bL27 family.

The protein is Large ribosomal subunit protein bL27 of Zymomonas mobilis subsp. mobilis (strain ATCC 31821 / ZM4 / CP4).